The primary structure comprises 206 residues: ATP-dependent Clp protease proteolytic subunit (206 aa).

Residue Ser107 is the Nucleophile of the active site. His132 is a catalytic residue.

Belongs to the peptidase S14 family. Fourteen ClpP subunits assemble into 2 heptameric rings which stack back to back to give a disk-like structure with a central cavity, resembling the structure of eukaryotic proteasomes.

It is found in the cytoplasm. The catalysed reaction is Hydrolysis of proteins to small peptides in the presence of ATP and magnesium. alpha-casein is the usual test substrate. In the absence of ATP, only oligopeptides shorter than five residues are hydrolyzed (such as succinyl-Leu-Tyr-|-NHMec, and Leu-Tyr-Leu-|-Tyr-Trp, in which cleavage of the -Tyr-|-Leu- and -Tyr-|-Trp bonds also occurs).. Functionally, cleaves peptides in various proteins in a process that requires ATP hydrolysis. Has a chymotrypsin-like activity. Plays a major role in the degradation of misfolded proteins. This Idiomarina loihiensis (strain ATCC BAA-735 / DSM 15497 / L2-TR) protein is ATP-dependent Clp protease proteolytic subunit.